The following is a 333-amino-acid chain: MSGKAERLKDEGSRLQVTAAGATAGLISRFVIAPLDVVKIRLQLQHHSLSDPLLHQRRAEIIGGGPVYKGTLPTIRHILRTEGLTGLWKGNIPAELLYVSYAAVQFTTYRSITQFLQAAFPKDQNKQLPPSVESFIAGASAGGVATAVTYPLDLLRTRFAAQGVERVYPSLVQALKTIYASEGVTGYFRGLGPGLAQIIPYMGTFFCVYETLRPRLSKLELPYSSGSAVAGVLASVMAKTGTFPLDLVRKRIQVQGPTRGMYVHKNIPVYDGGMVKTVATIVRREGVRGLYRGLTVSLFKAAPASAVTMWTYERALKLYIRLGAAGPGRKEGV.

Solcar repeat units lie at residues 12-115, 129-215, and 222-318; these read GSRL…ITQF, PPSV…LRPR, and PYSS…ALKL. 6 helical membrane-spanning segments follow: residues 17–35, 96–112, 135–155, 190–209, 221–238, and 293–310; these read VTAAGATAGLISRFVIAPL, LLYVSYAAVQFTTYRSI, FIAGASAGGVATAVTYPLDLL, GLGPGLAQIIPYMGTFFCVY, LPYSSGSAVAGVLASVMA, and GLTVSLFKAAPASAVTMW.

This sequence belongs to the mitochondrial carrier (TC 2.A.29) family.

Its subcellular location is the mitochondrion inner membrane. Mitochondrial transporter that mediates uptake of thiamine pyrophosphate (ThPP) into mitochondria. In Neurospora crassa (strain ATCC 24698 / 74-OR23-1A / CBS 708.71 / DSM 1257 / FGSC 987), this protein is Mitochondrial thiamine pyrophosphate carrier 1 (tpc-1).